The primary structure comprises 206 residues: Undecaprenyl-diphosphatase (206 aa).

5 helical membrane passes run 5–25, 53–73, 79–99, 138–158, and 164–184; these read YYWILLLLFLILSIYIKLIGG, FLSKYGREYVWIPVTALLLIF, IGITLVISFVIAIVLGEVSKY, VTLLLTSPKWMWILGIIEAVL, and VYVGVHWPLDVIAGWLLGSWI.

The protein resides in the cell membrane. The enzyme catalyses di-trans,octa-cis-undecaprenyl diphosphate + H2O = di-trans,octa-cis-undecaprenyl phosphate + phosphate + H(+). The chain is Undecaprenyl-diphosphatase (sepP) from Sulfolobus acidocaldarius (strain ATCC 33909 / DSM 639 / JCM 8929 / NBRC 15157 / NCIMB 11770).